We begin with the raw amino-acid sequence, 61 residues long: Large ribosomal subunit protein bL32 (61 aa).

Residues 1–16 (MAVPKRKTSPSKRGMR) are compositionally biased toward basic residues. Residues 1-61 (MAVPKRKTSP…RQVLTPKESA (61 aa)) are disordered. Over residues 28–44 (VEDKNSGELRRPHHIDL) the composition is skewed to basic and acidic residues.

This sequence belongs to the bacterial ribosomal protein bL32 family.

The protein is Large ribosomal subunit protein bL32 of Rhizobium etli (strain CIAT 652).